Here is a 396-residue protein sequence, read N- to C-terminus: Phosphoglycerate kinase (396 aa).

Substrate contacts are provided by residues 21–23, Arg-36, 59–62, Arg-119, and Arg-156; these read DFN and HLGK. ATP contacts are provided by residues Lys-206, Gly-294, Glu-325, and 352 to 355; that span reads GGDS.

Belongs to the phosphoglycerate kinase family. Monomer.

Its subcellular location is the cytoplasm. The catalysed reaction is (2R)-3-phosphoglycerate + ATP = (2R)-3-phospho-glyceroyl phosphate + ADP. It functions in the pathway carbohydrate degradation; glycolysis; pyruvate from D-glyceraldehyde 3-phosphate: step 2/5. The sequence is that of Phosphoglycerate kinase from Listeria monocytogenes serotype 4a (strain HCC23).